Consider the following 25-residue polypeptide: Small ribosomal subunit protein eS32 (25 aa).

A disordered region spans residues 1 to 25; it reads MRAKWRKKRVRRLKRKRRKTRARSK.

This sequence belongs to the eukaryotic ribosomal protein eS32 family. Component of the small ribosomal subunit.

In Quercus suber (Cork oak), this protein is Small ribosomal subunit protein eS32 (RPL41).